The primary structure comprises 213 residues: Methylthioribulose-1-phosphate dehydratase (213 aa).

Histidine 104 and histidine 106 together coordinate Zn(2+).

The protein belongs to the aldolase class II family. MtnB subfamily. Zn(2+) is required as a cofactor.

The enzyme catalyses 5-(methylsulfanyl)-D-ribulose 1-phosphate = 5-methylsulfanyl-2,3-dioxopentyl phosphate + H2O. It participates in amino-acid biosynthesis; L-methionine biosynthesis via salvage pathway; L-methionine from S-methyl-5-thio-alpha-D-ribose 1-phosphate: step 2/6. In terms of biological role, catalyzes the dehydration of methylthioribulose-1-phosphate (MTRu-1-P) into 2,3-diketo-5-methylthiopentyl-1-phosphate (DK-MTP-1-P). This chain is Methylthioribulose-1-phosphate dehydratase, found in Stenotrophomonas maltophilia (strain K279a).